The following is a 442-amino-acid chain: Probable serine/threonine-protein kinase PBL17 (442 aa).

G2 carries the N-myristoyl glycine lipid modification. C4 carries the S-palmitoyl cysteine lipid modification. T79 carries the phosphothreonine modification. Residues 90-370 (FRPDYILGEG…NHVVEVLETL (281 aa)) enclose the Protein kinase domain. Residues 96–104 (LGEGGFGVV) and K125 contribute to the ATP site. Y170 is modified (phosphotyrosine). D220 serves as the catalytic Proton acceptor. S254 is subject to Phosphoserine. Phosphothreonine occurs at positions 255 and 260. A Phosphotyrosine modification is found at Y268. The tract at residues 385–442 (HSRGKSVTLYEASSDSQGTRDGNGQRRRRPESGRSKSEAAVDTEKYVSTLSEPDTTKI) is disordered. Positions 395–406 (EASSDSQGTRDG) are enriched in polar residues. Over residues 414-429 (PESGRSKSEAAVDTEK) the composition is skewed to basic and acidic residues. Over residues 430–442 (YVSTLSEPDTTKI) the composition is skewed to polar residues.

It belongs to the protein kinase superfamily. Ser/Thr protein kinase family.

The protein localises to the cell membrane. The catalysed reaction is L-seryl-[protein] + ATP = O-phospho-L-seryl-[protein] + ADP + H(+). It catalyses the reaction L-threonyl-[protein] + ATP = O-phospho-L-threonyl-[protein] + ADP + H(+). Its function is as follows. May be involved in plant defense signaling. The sequence is that of Probable serine/threonine-protein kinase PBL17 from Arabidopsis thaliana (Mouse-ear cress).